We begin with the raw amino-acid sequence, 233 residues long: Ribonuclease 3 (233 aa).

The RNase III domain maps to 8–135; it reads AQRFLEDKQL…VIGAIYLDQG (128 aa). E48 contributes to the Mg(2+) binding site. D52 is a catalytic residue. The Mg(2+) site is built by D121 and E124. Residue E124 is part of the active site. The region spanning 161–230 is the DRBM domain; that stretch reads DYKSKLQELV…AQKVLQDNLV (70 aa).

Belongs to the ribonuclease III family. In terms of assembly, homodimer. Mg(2+) serves as cofactor.

The protein localises to the cytoplasm. The enzyme catalyses Endonucleolytic cleavage to 5'-phosphomonoester.. In terms of biological role, digests double-stranded RNA. Involved in the processing of primary rRNA transcript to yield the immediate precursors to the large and small rRNAs (23S and 16S). Processes some mRNAs, and tRNAs when they are encoded in the rRNA operon. Processes pre-crRNA and tracrRNA of type II CRISPR loci if present in the organism. The protein is Ribonuclease 3 of Syntrophomonas wolfei subsp. wolfei (strain DSM 2245B / Goettingen).